The sequence spans 688 residues: MGREYPLEKFRNIGIMAHIDAGKTTTTERILFYTGRTHKIGEVHEGQATMDWMAQEQERGITITSAATFCKWKGYAINIIDTPGHVDFTVEVERSLRVLDGAVTVLDAKSGVEPQTETVWRQADNYGVPRLVYVNKMDSTGADFYMCVNTLRDRLHCNAIPIQIPIGSESEFKGIVNLVKNEAIIYEDDLGTVMDEVEIPGDLKDEAEKYRTELIEAISELDEDIMMKYLEGEELTEEEIISAIRKGVISNKIVPVLCGSSYKNKGVQPMIDAVVDFMPSPLDIPPIKGTDPETGEETDRPADDNQPLSALAFKIATDPFVGKLAFTRIYSGIMKSGTYVYNSTKGKKERIARLVKMHSNRREEVDELRAGDLGAIVGLKDTTTGNTLCDEQNAVVLESMEFPEPVIHVAIEPKTKAGQEKMGIALSKLAEEDPTFKTHTDQETGQTIISGMGELHLEIIVDRLQREFKVECNVGKPQVAYKETIRKTVKAEGKFVRQSGGHGQYGHCWIEMSPSEEGYSFENAIVGGTIPKEYISPIDEGIKQASETGTVAGYPAINFKVKLYDGSYHDVDSSEMAFKIAASMAFKNAMSKADPVLLEPMMRVEVTVPEEYMGDVIGDINSRRGRIEGMDPRAGAQVIRSFVPLSEMFGYATVLRSRTQGRGVYSMTFDHYEEVPKSIQEKITGEKK.

Residues 8–282 (EKFRNIGIMA…AVVDFMPSPL (275 aa)) form the tr-type G domain. Residues 17–24 (AHIDAGKT), 81–85 (DTPGH), and 135–138 (NKMD) each bind GTP. The tract at residues 282–305 (LDIPPIKGTDPETGEETDRPADDN) is disordered.

It belongs to the TRAFAC class translation factor GTPase superfamily. Classic translation factor GTPase family. EF-G/EF-2 subfamily.

It localises to the cytoplasm. Its function is as follows. Catalyzes the GTP-dependent ribosomal translocation step during translation elongation. During this step, the ribosome changes from the pre-translocational (PRE) to the post-translocational (POST) state as the newly formed A-site-bound peptidyl-tRNA and P-site-bound deacylated tRNA move to the P and E sites, respectively. Catalyzes the coordinated movement of the two tRNA molecules, the mRNA and conformational changes in the ribosome. This is Elongation factor G from Clostridium kluyveri (strain NBRC 12016).